The primary structure comprises 123 residues: Integration host factor subunit alpha (123 aa).

The interval 97 to 123 (NANGSAPSMSSSASAVDDDKSESASRT) is disordered. The span at 98-111 (ANGSAPSMSSSASA) shows a compositional bias: low complexity. Basic and acidic residues predominate over residues 113-123 (DDDKSESASRT).

This sequence belongs to the bacterial histone-like protein family. In terms of assembly, heterodimer of an alpha and a beta chain.

Its function is as follows. This protein is one of the two subunits of integration host factor, a specific DNA-binding protein that functions in genetic recombination as well as in transcriptional and translational control. The chain is Integration host factor subunit alpha from Rhodopseudomonas palustris (strain BisB5).